The following is a 737-amino-acid chain: Polyribonucleotide nucleotidyltransferase (737 aa).

Mg(2+) contacts are provided by aspartate 489 and aspartate 495. In terms of domain architecture, KH spans 556 to 615 (PKIDTIKIDVDKIKIVIGKGGETIDKIIAETGVKIDIDEEGNVSIYSSDQDAINRAKEII). An S1 motif domain is found at 625-693 (DEVYRAKVVR…EKGRIDASMK (69 aa)). The disordered stretch occupies residues 691 to 737 (SMKALLPRPPKPEHDEKGEKSERPHRPRHQKDHKPKKEFTETPKDSE). Residues 700–714 (PKPEHDEKGEKSERP) are compositionally biased toward basic and acidic residues. Over residues 715-724 (HRPRHQKDHK) the composition is skewed to basic residues. Positions 725-737 (PKKEFTETPKDSE) are enriched in basic and acidic residues.

The protein belongs to the polyribonucleotide nucleotidyltransferase family. It depends on Mg(2+) as a cofactor.

It localises to the cytoplasm. It catalyses the reaction RNA(n+1) + phosphate = RNA(n) + a ribonucleoside 5'-diphosphate. Its function is as follows. Involved in mRNA degradation. Catalyzes the phosphorolysis of single-stranded polyribonucleotides processively in the 3'- to 5'-direction. In Streptococcus pneumoniae (strain JJA), this protein is Polyribonucleotide nucleotidyltransferase.